Reading from the N-terminus, the 273-residue chain is Cell wall mannoprotein 1 (273 aa).

The signal sequence occupies residues 1–17; that stretch reads MRFSAIFTLGLAGTALA. Positions 173–247 are disordered; that stretch reads DVSDSAPSSS…GSASATSPPL (75 aa). A compositionally biased stretch (low complexity) spans 177–247; the sequence is SAPSSSAGSS…GSASATSPPL (71 aa).

Belongs to the cell wall mannoprotein 1 family. Galactomannoprotein, glycosylated.

It localises to the secreted. Its subcellular location is the cell wall. Constitutive protein of the cell wall. Antigen target of host humoral immune response. This Aspergillus flavus protein is Cell wall mannoprotein 1.